A 141-amino-acid chain; its full sequence is Hemoglobin subunit alpha-D (141 aa).

The region spanning 1–141 is the Globin domain; it reads MLTAEDKKLI…VAAVLAEKYR (141 aa). His-58 and His-87 together coordinate heme b.

The protein belongs to the globin family. Heterotetramer of two alpha-D chains and two beta chains. As to expression, red blood cells.

In terms of biological role, involved in oxygen transport from the lung to the various peripheral tissues. The chain is Hemoglobin subunit alpha-D (HBAD) from Apus apus (Common swift).